The following is a 963-amino-acid chain: Pyruvate, phosphate dikinase 1, chloroplastic (963 aa).

Residues 1 to 76 constitute a chloroplast transit peptide; sequence MLYIRKKMTS…GLHRETKARA (76 aa). Threonine 543 bears the Phosphothreonine; by PDRP1 mark. Catalysis depends on histidine 545, which acts as the Tele-phosphohistidine intermediate. The substrate site is built by arginine 651, arginine 707, glutamate 836, glycine 857, threonine 858, asparagine 859, and aspartate 860. Glutamate 836 contacts Mg(2+). Aspartate 860 contacts Mg(2+). Catalysis depends on cysteine 922, which acts as the Proton donor.

This sequence belongs to the PEP-utilizing enzyme family. As to quaternary structure, homotetramer. Interacts with RP1 and RP2. Mg(2+) is required as a cofactor. In terms of processing, phosphorylation of Thr-543 in the dark inactivates the enzyme. Dephosphorylation upon light stimulation reactivates the enzyme. As to expression, isoform 1 is expressed in leaves, flowers and siliques. Isoform 2 is found in cotyledons, rosette and cauline leaves, petioles, flowers and siliques.

The protein resides in the plastid. It localises to the chloroplast. The protein localises to the cytoplasm. It carries out the reaction pyruvate + phosphate + ATP = phosphoenolpyruvate + AMP + diphosphate + H(+). Activated by light-induced dephosphorylation. Inhibited by dark-induced phosphorylation. Both reactions are catalyzed by PDRP1. In terms of biological role, formation of phosphoenolpyruvate. May be involved in regulating the flux of carbon into starch and fatty acids of seeds and in the remobilization of nitrogen reserves in senescing leaves. The chain is Pyruvate, phosphate dikinase 1, chloroplastic (PPDK) from Arabidopsis thaliana (Mouse-ear cress).